Reading from the N-terminus, the 243-residue chain is Vesicle-associated membrane protein-associated protein B (243 aa).

Ala-2 is subject to N-acetylalanine. Residues 2-218 (AKVEQVLSLE…PAPATPGKEE (217 aa)) lie on the Cytoplasmic side of the membrane. An MSP domain is found at 7–124 (VLSLEPQHEL…MDSKLRCVFE (118 aa)). Position 146 is a phosphoserine (Ser-146). A Glycyl lysine isopeptide (Lys-Gly) (interchain with G-Cter in SUMO1) cross-link involves residue Lys-147. Thr-150 is subject to Phosphothreonine. Residues Ser-158 and Ser-159 each carry the phosphoserine modification. Residues 161–196 (LDDTEVKKVMEECKRLQSEVQRLREENKQLKEEDGL) adopt a coiled-coil conformation. The segment covering 185–197 (EENKQLKEEDGLR) has biased composition (basic and acidic residues). The interval 185–217 (EENKQLKEEDGLRMRKPVLSNSPAPAPATPGKE) is disordered. Ser-206 is subject to Phosphoserine. Residues 219–239 (GLSTRLLALVVLFFIVGVIIG) form a helical; Anchor for type IV membrane protein membrane-spanning segment.

The protein belongs to the VAMP-associated protein (VAP) (TC 9.B.17) family. In terms of assembly, homodimer, and heterodimer with VAPA. Interacts with VAMP1 and VAMP2. Interacts (via MSP domain) with ZFYVE27. Interacts with RMDN3. Interacts with KIF5A in a ZFYVE27-dependent manner. Interacts (via MSP domain) with STARD3 (via phospho-FFAT motif). Interacts with STARD3NL (via FFAT motif). Interacts with CERT1. Interacts with PLEKHA3 and SACM1L to form a ternary complex. Interacts with VPS13A (via FFAT motif). Interacts with RB1CC1 (via phosphorylated FFAT motif), MIGA2 (via phosphorylated FFAT motif), RMDN3 (via phosphorylated FFAT motif), OSBPL1A (via FFAT motif), KCNB1 (via phosphorylated FFAT motif) and KCNB2 (via phosphorylated FFAT motif). Interacts (via MSP domain) with WDR44 (via FFAT motif); the interactions connect the endoplasmic reticulum (ER) with the endosomal tubule.

It is found in the endoplasmic reticulum membrane. Functionally, endoplasmic reticulum (ER)-anchored protein that mediates the formation of contact sites between the ER and endosomes via interaction with FFAT motif-containing proteins such as STARD3 or WDR44. Interacts with STARD3 in a FFAT motif phosphorylation dependent manner. Via interaction with WDR44 participates in neosynthesized protein export. Participates in the endoplasmic reticulum unfolded protein response (UPR) by inducing ERN1/IRE1 activity. Involved in cellular calcium homeostasis regulation. The polypeptide is Vesicle-associated membrane protein-associated protein B (Sus scrofa (Pig)).